The primary structure comprises 64 residues: Prokaryotic ubiquitin-like protein Pup (64 aa).

The tract at residues 1–37 is disordered; sequence MAQEQTQRAGGGEDDETTGGDGSAGQERREKLAAETD. Residues 21–58 form an ARC ATPase binding region; that stretch reads DGSAGQERREKLAAETDDLLDEIDDVLEENAEDFVRAY. Positions 24-52 form a coiled coil; sequence AGQERREKLAAETDDLLDEIDDVLEENAE. Glutamine 64 is subject to Deamidated glutamine. Residue glutamine 64 forms an Isoglutamyl lysine isopeptide (Gln-Lys) (interchain with K-? in acceptor proteins) linkage.

It belongs to the prokaryotic ubiquitin-like protein family. As to quaternary structure, strongly interacts with the proteasome-associated ATPase ARC through a hydrophobic interface; the interacting region of Pup lies in its C-terminal half. There is one Pup binding site per ARC hexamer ring. In terms of processing, is modified by deamidation of its C-terminal glutamine to glutamate by the deamidase Dop, a prerequisite to the subsequent pupylation process.

Its pathway is protein degradation; proteasomal Pup-dependent pathway. Functionally, protein modifier that is covalently attached to lysine residues of substrate proteins, thereby targeting them for proteasomal degradation. The tagging system is termed pupylation. The chain is Prokaryotic ubiquitin-like protein Pup from Rhodococcus erythropolis (strain PR4 / NBRC 100887).